Reading from the N-terminus, the 105-residue chain is MANRIKKGDQVVINTGKDKGKQGEVVRVDGDRVIVSNANLIKRHTKPNPQAGVAGGVVEREASIHISNVNIVNPATGKGERVGFKVLEDGRKLRVFRSSGEALDA.

This sequence belongs to the universal ribosomal protein uL24 family. Part of the 50S ribosomal subunit.

Functionally, one of two assembly initiator proteins, it binds directly to the 5'-end of the 23S rRNA, where it nucleates assembly of the 50S subunit. In terms of biological role, one of the proteins that surrounds the polypeptide exit tunnel on the outside of the subunit. This chain is Large ribosomal subunit protein uL24, found in Xanthomonas oryzae pv. oryzae (strain MAFF 311018).